A 734-amino-acid chain; its full sequence is Photosystem I P700 chlorophyll a apoprotein A2 (734 aa).

A run of 8 helical transmembrane segments spans residues isoleucine 46–alanine 69, leucine 135–glutamine 158, leucine 175–isoleucine 199, isoleucine 273–tyrosine 291, isoleucine 330–tyrosine 353, alanine 369–isoleucine 395, alanine 417–histidine 439, and phenylalanine 517–valine 535. 2 residues coordinate [4Fe-4S] cluster: cysteine 559 and cysteine 568. 2 helical membrane passes run alanine 575–tryptophan 596 and leucine 643–isoleucine 665. Chlorophyll a contacts are provided by histidine 654, methionine 662, and tyrosine 670. Tryptophan 671 serves as a coordination point for phylloquinone. Residues leucine 707–alanine 727 traverse the membrane as a helical segment.

The protein belongs to the PsaA/PsaB family. In terms of assembly, the PsaA/B heterodimer binds the P700 chlorophyll special pair and subsequent electron acceptors. PSI consists of a core antenna complex that captures photons, and an electron transfer chain that converts photonic excitation into a charge separation. The eukaryotic PSI reaction center is composed of at least 11 subunits. P700 is a chlorophyll a/chlorophyll a' dimer, A0 is one or more chlorophyll a, A1 is one or both phylloquinones and FX is a shared 4Fe-4S iron-sulfur center. is required as a cofactor.

Its subcellular location is the plastid. The protein resides in the chloroplast thylakoid membrane. It catalyses the reaction reduced [plastocyanin] + hnu + oxidized [2Fe-2S]-[ferredoxin] = oxidized [plastocyanin] + reduced [2Fe-2S]-[ferredoxin]. Its function is as follows. PsaA and PsaB bind P700, the primary electron donor of photosystem I (PSI), as well as the electron acceptors A0, A1 and FX. PSI is a plastocyanin-ferredoxin oxidoreductase, converting photonic excitation into a charge separation, which transfers an electron from the donor P700 chlorophyll pair to the spectroscopically characterized acceptors A0, A1, FX, FA and FB in turn. Oxidized P700 is reduced on the lumenal side of the thylakoid membrane by plastocyanin. The chain is Photosystem I P700 chlorophyll a apoprotein A2 from Amborella trichopoda.